Here is a 306-residue protein sequence, read N- to C-terminus: MEVTFFGTSAGLPTKERNTQSIALNLEPYSNSIWLFDVGEGTQHQILRHSIKLGKIDHIFITHMHGDHIFGLPGLLTSRSFQGGENKPLTIIGPKGIQNYIETSLQLSESHLNYPITYIEINQQLAYHHNGFTVQAEMLNHGIPSFGYRIEAPITPGTINVEALRGIGLEPGPKYQEVKLQETFEYKGLIYNSDDFKGKAKPGPIISIFGDTKPCENEYELAKNSDLMIHEATYIEGDKKLANNYHHSHIDDVFNLIKQANVNKSLITHISNRYNIDEVTSIYNELSLDQTSPHFYFVKDFDTFKI.

Residues H63, H65, D67, H68, H141, D211, and H269 each contribute to the Zn(2+) site. D67 acts as the Proton acceptor in catalysis.

Belongs to the RNase Z family. As to quaternary structure, homodimer. Zn(2+) is required as a cofactor.

The enzyme catalyses Endonucleolytic cleavage of RNA, removing extra 3' nucleotides from tRNA precursor, generating 3' termini of tRNAs. A 3'-hydroxy group is left at the tRNA terminus and a 5'-phosphoryl group is left at the trailer molecule.. Its function is as follows. Zinc phosphodiesterase, which displays some tRNA 3'-processing endonuclease activity. Probably involved in tRNA maturation, by removing a 3'-trailer from precursor tRNA. This chain is Ribonuclease Z, found in Staphylococcus epidermidis (strain ATCC 35984 / DSM 28319 / BCRC 17069 / CCUG 31568 / BM 3577 / RP62A).